We begin with the raw amino-acid sequence, 233 residues long: Small ribosomal subunit protein uS3 (233 aa).

In terms of domain architecture, KH type-2 spans 28 to 96 (EFADNLDSDF…LRKVVADIAG (69 aa)).

The protein belongs to the universal ribosomal protein uS3 family. Part of the 30S ribosomal subunit. Forms a tight complex with proteins S10 and S14.

Binds the lower part of the 30S subunit head. Binds mRNA in the 70S ribosome, positioning it for translation. The polypeptide is Small ribosomal subunit protein uS3 (Shigella flexneri).